Here is a 73-residue protein sequence, read N- to C-terminus: Large ribosomal subunit protein uL29 (73 aa).

Belongs to the universal ribosomal protein uL29 family.

The sequence is that of Large ribosomal subunit protein uL29 (rpmC) from Synechocystis sp. (strain ATCC 27184 / PCC 6803 / Kazusa).